The following is a 122-amino-acid chain: Large ribosomal subunit protein uL14c (122 aa).

The protein belongs to the universal ribosomal protein uL14 family. In terms of assembly, part of the 50S ribosomal subunit.

It is found in the plastid. The protein localises to the chloroplast. Binds to 23S rRNA. This chain is Large ribosomal subunit protein uL14c, found in Morus indica (Mulberry).